The primary structure comprises 344 residues: Dihydroorotate dehydrogenase (quinone) (344 aa).

Residues 65 to 69 and Thr-89 each bind FMN; that span reads AGLDK. Lys-69 contributes to the substrate binding site. Substrate is bound at residue 114 to 118; sequence NRMGF. The FMN site is built by Asn-145 and Asn-178. Substrate is bound at residue Asn-178. Ser-181 serves as the catalytic Nucleophile. Asn-183 contacts substrate. FMN contacts are provided by Lys-223 and Thr-251. 252-253 contacts substrate; it reads NT. Residues Gly-274, Gly-303, and 324-325 each bind FMN; that span reads YS.

It belongs to the dihydroorotate dehydrogenase family. Type 2 subfamily. As to quaternary structure, monomer. Requires FMN as cofactor.

Its subcellular location is the cell membrane. The catalysed reaction is (S)-dihydroorotate + a quinone = orotate + a quinol. It functions in the pathway pyrimidine metabolism; UMP biosynthesis via de novo pathway; orotate from (S)-dihydroorotate (quinone route): step 1/1. Its function is as follows. Catalyzes the conversion of dihydroorotate to orotate with quinone as electron acceptor. The protein is Dihydroorotate dehydrogenase (quinone) of Cupriavidus taiwanensis (strain DSM 17343 / BCRC 17206 / CCUG 44338 / CIP 107171 / LMG 19424 / R1) (Ralstonia taiwanensis (strain LMG 19424)).